Reading from the N-terminus, the 96-residue chain is Large ribosomal subunit protein uL23 (96 aa).

It belongs to the universal ribosomal protein uL23 family. Part of the 50S ribosomal subunit. Contacts protein L29, and trigger factor when it is bound to the ribosome.

Functionally, one of the early assembly proteins it binds 23S rRNA. One of the proteins that surrounds the polypeptide exit tunnel on the outside of the ribosome. Forms the main docking site for trigger factor binding to the ribosome. The polypeptide is Large ribosomal subunit protein uL23 (Syntrophus aciditrophicus (strain SB)).